The following is a 967-amino-acid chain: Probable serine/threonine-protein kinase DDB_G0290621 (967 aa).

3 disordered regions span residues 65–122 (EDSD…KEKE), 215–251 (SSLS…SSSS), and 287–326 (QQQL…SPRT). Positions 66–94 (DSDEDDDDEEDEEDEEDSDEEEDDDVVED) are enriched in acidic residues. Residues 95–122 (DNTKDIGKSRDSDKSIKGKEKGKEKEKE) show a composition bias toward basic and acidic residues. The segment covering 297 to 326 (QQQQQQQQQQQQQNNSMLQQSNNNNISPRT) has biased composition (low complexity). Residues 345–610 (FNDSNKIGEG…EIRSRLSEII (266 aa)) form the Protein kinase domain. ATP contacts are provided by residues 351–359 (IGEGGQCSI) and Lys368. Asp467 functions as the Proton acceptor in the catalytic mechanism. 3 disordered regions span residues 634–667 (DDSL…NNNN), 700–752 (STSN…NNNI), and 862–882 (TSSS…NPSN). Positions 639–666 (NNNNNNNQNNNNQNNNNNNNNNNNNNNN) are enriched in low complexity. The segment covering 863-882 (SSSSNKNNNNNNNDNNNPSN) has biased composition (low complexity).

This sequence belongs to the protein kinase superfamily. TKL Ser/Thr protein kinase family.

The enzyme catalyses L-seryl-[protein] + ATP = O-phospho-L-seryl-[protein] + ADP + H(+). It catalyses the reaction L-threonyl-[protein] + ATP = O-phospho-L-threonyl-[protein] + ADP + H(+). This chain is Probable serine/threonine-protein kinase DDB_G0290621, found in Dictyostelium discoideum (Social amoeba).